The following is a 793-amino-acid chain: MNYRGIYRRRYVFVLLLLVAVVNISYGWTVLKNKDYKRRYLSPSGVEKVRKHLSRKYVASRNNTQTFKKHYFSNTWAVHIDPPDNDVADRIAKKHGFTNIGKIGNIEGHYHFKHEEIGERELEKARHKTALLNLEDEVKFAEQQKILERVKRDGIPNDPYFKDMWYLLNTGQASGPAGVDMNVVPVWKKNITGRGIVISVLDDGLDWTHPDLEANYDQTASIVLNDNDNDPMPRDSDADNCHGTRCAGEAAAIANNGICGTGVAYNAKIGGVRMLDGQATDALEASALGFRGDHIDIYINCWGPKDDGKTFGKPGPMAAKALRLGAEQGRNRLGSIFVWATGNGGLTDDDCNCDGYTTSIFTISIGCIGDHGLSAYYTEKCSSTLAVTFNGASHKEGRENKMVTTDLYHQCTEEFKGTSASAPLAAGIIALTLEANPLLTWRDVQALIVHTAQITSPVDEGWKRNGAGFHFNHKFGFGRLDANAMVNAAQSWKNLPAQRKCTAASGFDHQDIPRGDSLFINIPTVACESSSAQIAKVEHVVLTVSFVHRRRGDVSIDLISPKDTKSQMLSPRKYDDSDEGLDEWSFMTVYNWGENPKGIWRLKITDNPNQDDVMNLFNGDNTDDVESLEERVIDTQTKQNKAEWEKMRKENPYFDVPYPTGVRKDKVLGSTEINDNSFDTPHTETFKIIRNHIPEVNLQNNDNMNTLNFDPVTGRKKNSINKKIINSRKRNFLTFRNFLKKSKKVQVQQEETGTQRVQVNAGYENPRISCESGYTTCSGVLINYKLTFYGTGE.

An N-terminal signal peptide occupies residues Met1 to Thr29. Residues Val30–Arg152 constitute a propeptide that is removed on maturation. N-linked (GlcNAc...) asparagine glycans are attached at residues Asn62 and Asn190. A Peptidase S8 domain is found at Met164–Val486. Residues Asp202 and His242 each act as charge relay system in the active site. Intrachain disulfides connect Cys259-Cys411 and Cys351-Cys381. Ser419 (charge relay system) is an active-site residue. Residues Leu495–Lys638 form the P/Homo B domain. Cys501 and Cys527 are joined by a disulfide.

The protein belongs to the peptidase S8 family. Furin subfamily. Predominantly in the body column.

Probably involved in the processing of hormone and other protein precursors at sites comprised of pairs of basic amino acid residues. The protein is PC3-like endoprotease variant A of Hydra vulgaris (Hydra).